The sequence spans 255 residues: MVQQLALFSAIEDESYPLSVETLTILSSNRPRLFANFNKIYKPNPSLQIEKVNAKNQLVEQTRVKLSTAVPLSKLGNGAELNYHFMEKLSNDDIESFNVKSYIQDIDSNNKTNWAFQISDIPAAGNNRKLSSQTIHESVIQSSSGSVSSFIDELGYVNDFQYINVGVKFQFLSGVVMEIYKVWQVVQKDQEVSMKLITKDGFMIKAMYNVNKSTDIESLNNGSQLLLKLKTDLRDYIELDIPDRKCMDTRLNHLD.

The protein belongs to the Mediator complex subunit 18 family. As to quaternary structure, component of the Mediator complex.

It localises to the nucleus. Functionally, component of the Mediator complex, a coactivator involved in the regulated transcription of nearly all RNA polymerase II-dependent genes. Mediator functions as a bridge to convey information from gene-specific regulatory proteins to the basal RNA polymerase II transcription machinery. Mediator is recruited to promoters by direct interactions with regulatory proteins and serves as a scaffold for the assembly of a functional preinitiation complex with RNA polymerase II and the general transcription factors. The sequence is that of Mediator of RNA polymerase II transcription subunit 18 (SRB5) from Kluyveromyces lactis (strain ATCC 8585 / CBS 2359 / DSM 70799 / NBRC 1267 / NRRL Y-1140 / WM37) (Yeast).